We begin with the raw amino-acid sequence, 299 residues long: Hydrogenase maturation factor HypB (299 aa).

Residues C2, C5, and C7 each coordinate Ni(2+). The segment at 18-57 is disordered; that stretch reads EVGDDGHGHHHHDGHHDHDHDHDHHRGDHEHDDHHHAEDG. Positions 31 to 57 are enriched in basic and acidic residues; it reads GHHDHDHDHDHHRGDHEHDDHHHAEDG. Positions 107–268 are G-domain; it reads ALNFVSSPGS…LRVNPRLQTL (162 aa). Ni(2+) is bound by residues C167, H168, and C199. Positions 167, 168, and 199 each coordinate Zn(2+).

Belongs to the SIMIBI class G3E GTPase family. HypB/HupM subfamily.

Functionally, involved in the maturation of [NiFe] hydrogenases. Required for nickel insertion into the metal center of the hydrogenase. Exhibits a low intrinsic GTPase activity, which is essential for nickel insertion. Is able to bind 4 nickel ions per subunit. Can also bind zinc. The sequence is that of Hydrogenase maturation factor HypB from Rhizobium leguminosarum bv. viciae.